We begin with the raw amino-acid sequence, 256 residues long: Protein crossbronx-like (256 aa).

The UBC core domain maps to 17-179 (NQGYKVLAEY…AKVSILWSCQ (163 aa)).

The protein belongs to the ubiquitin-conjugating enzyme family. FTS subfamily.

The protein is Protein crossbronx-like of Drosophila virilis (Fruit fly).